The following is a 362-amino-acid chain: Holliday junction branch migration complex subunit RuvB (362 aa).

Positions 1–183 (MADSSLVGGG…FGFTGHLEFY (183 aa)) are large ATPase domain (RuvB-L). Residues Leu-22, Arg-23, Gly-64, Lys-67, Thr-68, Thr-69, 130 to 132 (EDF), Arg-173, Tyr-183, and Arg-220 each bind ATP. Residue Thr-68 coordinates Mg(2+). The tract at residues 184–254 (SVEELELVLR…TASAALDMYE (71 aa)) is small ATPAse domain (RuvB-S). Residues 257-362 (KRGLDRLDRS…PVAEWLPNGQ (106 aa)) are head domain (RuvB-H). Residues Arg-312 and Arg-317 each contribute to the DNA site.

Belongs to the RuvB family. As to quaternary structure, homohexamer. Forms an RuvA(8)-RuvB(12)-Holliday junction (HJ) complex. HJ DNA is sandwiched between 2 RuvA tetramers; dsDNA enters through RuvA and exits via RuvB. An RuvB hexamer assembles on each DNA strand where it exits the tetramer. Each RuvB hexamer is contacted by two RuvA subunits (via domain III) on 2 adjacent RuvB subunits; this complex drives branch migration. In the full resolvosome a probable DNA-RuvA(4)-RuvB(12)-RuvC(2) complex forms which resolves the HJ.

The protein resides in the cytoplasm. It catalyses the reaction ATP + H2O = ADP + phosphate + H(+). In terms of biological role, the RuvA-RuvB-RuvC complex processes Holliday junction (HJ) DNA during genetic recombination and DNA repair, while the RuvA-RuvB complex plays an important role in the rescue of blocked DNA replication forks via replication fork reversal (RFR). RuvA specifically binds to HJ cruciform DNA, conferring on it an open structure. The RuvB hexamer acts as an ATP-dependent pump, pulling dsDNA into and through the RuvAB complex. RuvB forms 2 homohexamers on either side of HJ DNA bound by 1 or 2 RuvA tetramers; 4 subunits per hexamer contact DNA at a time. Coordinated motions by a converter formed by DNA-disengaged RuvB subunits stimulates ATP hydrolysis and nucleotide exchange. Immobilization of the converter enables RuvB to convert the ATP-contained energy into a lever motion, pulling 2 nucleotides of DNA out of the RuvA tetramer per ATP hydrolyzed, thus driving DNA branch migration. The RuvB motors rotate together with the DNA substrate, which together with the progressing nucleotide cycle form the mechanistic basis for DNA recombination by continuous HJ branch migration. Branch migration allows RuvC to scan DNA until it finds its consensus sequence, where it cleaves and resolves cruciform DNA. This is Holliday junction branch migration complex subunit RuvB from Arthrobacter sp. (strain FB24).